Reading from the N-terminus, the 285-residue chain is ATP phosphoribosyltransferase (285 aa).

Belongs to the ATP phosphoribosyltransferase family. Long subfamily. Mg(2+) serves as cofactor.

It localises to the cytoplasm. The catalysed reaction is 1-(5-phospho-beta-D-ribosyl)-ATP + diphosphate = 5-phospho-alpha-D-ribose 1-diphosphate + ATP. The protein operates within amino-acid biosynthesis; L-histidine biosynthesis; L-histidine from 5-phospho-alpha-D-ribose 1-diphosphate: step 1/9. Feedback inhibited by histidine. Its function is as follows. Catalyzes the condensation of ATP and 5-phosphoribose 1-diphosphate to form N'-(5'-phosphoribosyl)-ATP (PR-ATP). Has a crucial role in the pathway because the rate of histidine biosynthesis seems to be controlled primarily by regulation of HisG enzymatic activity. In Sulfolobus acidocaldarius (strain ATCC 33909 / DSM 639 / JCM 8929 / NBRC 15157 / NCIMB 11770), this protein is ATP phosphoribosyltransferase.